Here is a 392-residue protein sequence, read N- to C-terminus: L-rhamnonate dehydratase (392 aa).

2 residues coordinate substrate: His22 and Arg48. Residues Asp214, Glu240, and Glu268 each contribute to the Mg(2+) site. His318 serves as the catalytic Proton acceptor. Glu338 is a binding site for substrate.

This sequence belongs to the mandelate racemase/muconate lactonizing enzyme family. RhamD subfamily. In terms of assembly, homooctamer; tetramer of dimers. Mg(2+) is required as a cofactor.

The enzyme catalyses L-rhamnonate = 2-dehydro-3-deoxy-L-rhamnonate + H2O. Its function is as follows. Catalyzes the dehydration of L-rhamnonate to 2-keto-3-deoxy-L-rhamnonate (KDR). In Burkholderia cenocepacia (strain HI2424), this protein is L-rhamnonate dehydratase.